We begin with the raw amino-acid sequence, 444 residues long: Argininosuccinate synthase (444 aa).

Residues 18 to 26 and alanine 44 each bind ATP; that span reads AFSGGLDTS. Residue tyrosine 100 participates in L-citrulline binding. ATP-binding residues include glycine 130 and threonine 132. L-aspartate contacts are provided by threonine 132, asparagine 136, and aspartate 137. Asparagine 136 is an L-citrulline binding site. Aspartate 137 is a binding site for ATP. Residues arginine 140 and serine 193 each coordinate L-citrulline. Residue aspartate 195 coordinates ATP. The L-citrulline site is built by threonine 202, glutamate 204, and glutamate 281.

This sequence belongs to the argininosuccinate synthase family. Type 2 subfamily. As to quaternary structure, homotetramer.

The protein localises to the cytoplasm. The catalysed reaction is L-citrulline + L-aspartate + ATP = 2-(N(omega)-L-arginino)succinate + AMP + diphosphate + H(+). It functions in the pathway amino-acid biosynthesis; L-arginine biosynthesis; L-arginine from L-ornithine and carbamoyl phosphate: step 2/3. In Histophilus somni (strain 129Pt) (Haemophilus somnus), this protein is Argininosuccinate synthase.